The following is a 69-amino-acid chain: Large ribosomal subunit protein bL31 (69 aa).

Zn(2+) contacts are provided by C16, C18, C37, and C40.

The protein belongs to the bacterial ribosomal protein bL31 family. Type A subfamily. As to quaternary structure, part of the 50S ribosomal subunit. The cofactor is Zn(2+).

Its function is as follows. Binds the 23S rRNA. The protein is Large ribosomal subunit protein bL31 of Syntrophotalea carbinolica (strain DSM 2380 / NBRC 103641 / GraBd1) (Pelobacter carbinolicus).